A 197-amino-acid polypeptide reads, in one-letter code: ATP-dependent Clp protease proteolytic subunit 1 (197 aa).

S96 functions as the Nucleophile in the catalytic mechanism. H121 is an active-site residue.

Belongs to the peptidase S14 family. Fourteen ClpP subunits assemble into 2 heptameric rings which stack back to back to give a disk-like structure with a central cavity, resembling the structure of eukaryotic proteasomes.

It localises to the cytoplasm. It carries out the reaction Hydrolysis of proteins to small peptides in the presence of ATP and magnesium. alpha-casein is the usual test substrate. In the absence of ATP, only oligopeptides shorter than five residues are hydrolyzed (such as succinyl-Leu-Tyr-|-NHMec, and Leu-Tyr-Leu-|-Tyr-Trp, in which cleavage of the -Tyr-|-Leu- and -Tyr-|-Trp bonds also occurs).. Cleaves peptides in various proteins in a process that requires ATP hydrolysis. Has a chymotrypsin-like activity. Plays a major role in the degradation of misfolded proteins. This Synechococcus sp. (strain ATCC 27144 / PCC 6301 / SAUG 1402/1) (Anacystis nidulans) protein is ATP-dependent Clp protease proteolytic subunit 1.